Consider the following 306-residue polypeptide: D-alanine--D-alanine ligase (306 aa).

An ATP-grasp domain is found at K102 to E300. An ATP-binding site is contributed by P128–T183. Mg(2+)-binding residues include D252, E267, and N269.

This sequence belongs to the D-alanine--D-alanine ligase family. The cofactor is Mg(2+). Requires Mn(2+) as cofactor.

The protein localises to the cytoplasm. It carries out the reaction 2 D-alanine + ATP = D-alanyl-D-alanine + ADP + phosphate + H(+). The protein operates within cell wall biogenesis; peptidoglycan biosynthesis. Functionally, cell wall formation. This is D-alanine--D-alanine ligase from Sinorhizobium fredii (strain NBRC 101917 / NGR234).